An 880-amino-acid polypeptide reads, in one-letter code: Leucine--tRNA ligase (880 aa).

A 'HIGH' region motif is present at residues proline 46–histidine 56. Positions lysine 638–serine 642 match the 'KMSKS' region motif. Lysine 641 is a binding site for ATP.

This sequence belongs to the class-I aminoacyl-tRNA synthetase family.

It localises to the cytoplasm. The catalysed reaction is tRNA(Leu) + L-leucine + ATP = L-leucyl-tRNA(Leu) + AMP + diphosphate. The sequence is that of Leucine--tRNA ligase from Xanthomonas axonopodis pv. citri (strain 306).